A 532-amino-acid chain; its full sequence is Ankyrin repeat-containing protein At2g01680 (532 aa).

7 ANK repeats span residues 9 to 38 (LTHQ…GDEL), 58 to 89 (AGET…TVKI), 93 to 122 (SDMN…ELCR), 127 to 156 (SNTS…SCAM), 161 to 190 (NGKT…AIVG), 195 to 224 (KGQT…TILN), and 229 to 259 (KGNT…EVNA). The next 4 membrane-spanning stretches (helical) occupy residues 354–374 (ITVV…NLPG), 396–416 (VFCL…VVQI), 436–456 (LMWA…FAVV), and 467–487 (ITLL…YFVF).

The protein resides in the membrane. This chain is Ankyrin repeat-containing protein At2g01680, found in Arabidopsis thaliana (Mouse-ear cress).